The following is a 163-amino-acid chain: MAEDGPQKQQLDMPLVLDQDLTKQMRLRVESLKQRGEKKQDGEKLLRPAESVYRLDFIQQQKLQFDHWNVVLDKPGKVTITGTSQNWTPDLTNLMTRQLLDPAAIFWRKEDSDAMDWNEADALEFGERLSDLAKIRKVMYFLITFGEGVEPANLKASVVFNQL.

An N-acetylalanine modification is found at Ala-2.

The protein belongs to the olfactory marker protein family. As to quaternary structure, interacts with BEX1 and BEX2. Uniquely associated with mature olfactory receptor neurons.

The protein localises to the cytoplasm. In terms of biological role, may act as a modulator of the olfactory signal-transduction cascade. This is Olfactory marker protein (Omp) from Rattus norvegicus (Rat).